The following is a 264-amino-acid chain: uncharacterized protein (264 aa).

A divalent metal cation-binding residues include His-7, His-9, Glu-102, His-138, His-163, and Asp-213.

Belongs to the metallo-dependent hydrolases superfamily. TatD-type hydrolase family. The cofactor is a divalent metal cation.

This is an uncharacterized protein from Buchnera aphidicola subsp. Acyrthosiphon pisum (strain APS) (Acyrthosiphon pisum symbiotic bacterium).